A 357-amino-acid chain; its full sequence is D-alanine--D-alanine ligase (357 aa).

An ATP-grasp domain is found at 134-339; the sequence is KQLFEHRGLP…YPDLIAKLID (206 aa). 167-222 provides a ligand contact to ATP; the sequence is NDKLTYPVFVKPANLGSSVGISKCNNEEELKSGITEAFQFDRKLVIEQGINAREIE. Mg(2+)-binding residues include D293, E306, and N308.

It belongs to the D-alanine--D-alanine ligase family. It depends on Mg(2+) as a cofactor. Requires Mn(2+) as cofactor.

The protein resides in the cytoplasm. It catalyses the reaction 2 D-alanine + ATP = D-alanyl-D-alanine + ADP + phosphate + H(+). It functions in the pathway cell wall biogenesis; peptidoglycan biosynthesis. Cell wall formation. This Staphylococcus epidermidis (strain ATCC 12228 / FDA PCI 1200) protein is D-alanine--D-alanine ligase.